The chain runs to 589 residues: Guanylate-binding protein 2 (589 aa).

The tract at residues 1–309 (MASEIHMSEP…GAISNGSLPC (309 aa)) is GTPase domain (Globular). The GB1/RHD3-type G domain occupies 35–276 (TQPVVVVAIV…FTSYILSYSS (242 aa)). GTP contacts are provided by residues 45 to 52 (GLYRTGKS), 181 to 182 (RD), and Leu245. Position 586 is a cysteine methyl ester (Cys586). Cys586 is lipidated: S-geranylgeranyl cysteine. The propeptide at 587–589 (TIL) is removed in mature form.

It belongs to the TRAFAC class dynamin-like GTPase superfamily. GB1/RHD3 GTPase family. GB1 subfamily. In terms of assembly, homodimer; homodimerization occurs upon GTP-binding and is required for the association with membranous structures. Heterodimer with other family members, including GBP1, GBP3, GBP4 and GBP5. Isoprenylation is required for proper subcellular location.

It localises to the cytoplasmic vesicle membrane. The protein resides in the golgi apparatus membrane. Its subcellular location is the cytoplasm. It is found in the perinuclear region. The enzyme catalyses GTP + H2O = GDP + phosphate + H(+). Functionally, interferon (IFN)-inducible GTPase that plays important roles in innate immunity against a diverse range of bacterial, viral and protozoan pathogens. Hydrolyzes GTP to GMP in 2 consecutive cleavage reactions, but the major reaction product is GDP. Following infection, recruited to the pathogen-containing vacuoles or vacuole-escaped bacteria and acts as a positive regulator of inflammasome assembly by promoting the release of inflammasome ligands from bacteria. Acts by promoting lysis of pathogen-containing vacuoles, releasing pathogens into the cytosol. Following pathogen release in the cytosol, promotes recruitment of proteins that mediate bacterial cytolysis, such as Gm12250/Irgb10: this liberates ligands that are detected by inflammasomes, such as lipopolysaccharide (LPS) that activates the non-canonical CASP4/CASP11 inflammasome or double-stranded DNA (dsDNA) that activates the AIM2 inflammasome. Confers protection to the protozoan pathogen Toxoplasma gondii. Independently of its GTPase activity, acts as an inhibitor of various viruses infectivity by inhibiting FURIN-mediated maturation of viral envelope proteins. This Mus musculus (Mouse) protein is Guanylate-binding protein 2.